We begin with the raw amino-acid sequence, 57 residues long: DNA-directed RNA polymerase subunit Rpo6 (57 aa).

This sequence belongs to the archaeal Rpo6/eukaryotic RPB6 RNA polymerase subunit family. In terms of assembly, part of the RNA polymerase complex.

It localises to the cytoplasm. The enzyme catalyses RNA(n) + a ribonucleoside 5'-triphosphate = RNA(n+1) + diphosphate. Functionally, DNA-dependent RNA polymerase (RNAP) catalyzes the transcription of DNA into RNA using the four ribonucleoside triphosphates as substrates. This Methanocaldococcus jannaschii (strain ATCC 43067 / DSM 2661 / JAL-1 / JCM 10045 / NBRC 100440) (Methanococcus jannaschii) protein is DNA-directed RNA polymerase subunit Rpo6.